The primary structure comprises 286 residues: Ribosomal RNA small subunit methyltransferase A (286 aa).

Residues Asn-28, Leu-30, Gly-55, Glu-77, Asp-103, and Asn-123 each coordinate S-adenosyl-L-methionine.

The protein belongs to the class I-like SAM-binding methyltransferase superfamily. rRNA adenine N(6)-methyltransferase family. RsmA subfamily.

The protein resides in the cytoplasm. It carries out the reaction adenosine(1518)/adenosine(1519) in 16S rRNA + 4 S-adenosyl-L-methionine = N(6)-dimethyladenosine(1518)/N(6)-dimethyladenosine(1519) in 16S rRNA + 4 S-adenosyl-L-homocysteine + 4 H(+). In terms of biological role, specifically dimethylates two adjacent adenosines (A1518 and A1519) in the loop of a conserved hairpin near the 3'-end of 16S rRNA in the 30S particle. May play a critical role in biogenesis of 30S subunits. The protein is Ribosomal RNA small subunit methyltransferase A of Bradyrhizobium sp. (strain ORS 278).